We begin with the raw amino-acid sequence, 201 residues long: Dephospho-CoA kinase (201 aa).

One can recognise a DPCK domain in the interval 3–201; that stretch reads IIGLTGGMAA…ALLHRLREAS (199 aa). 11–16 contributes to the ATP binding site; that stretch reads AAGKST.

This sequence belongs to the CoaE family.

The protein localises to the cytoplasm. It catalyses the reaction 3'-dephospho-CoA + ATP = ADP + CoA + H(+). Its pathway is cofactor biosynthesis; coenzyme A biosynthesis; CoA from (R)-pantothenate: step 5/5. Catalyzes the phosphorylation of the 3'-hydroxyl group of dephosphocoenzyme A to form coenzyme A. This is Dephospho-CoA kinase from Gluconobacter oxydans (strain 621H) (Gluconobacter suboxydans).